The following is a 301-amino-acid chain: Acidic endochitinase (301 aa).

Positions 1–25 (MARTPQSTPLLISLSVLALLQTSYA) are cleaved as a signal peptide. The region spanning 26–301 (GGIAIYWGQN…GYSSSIKSSV (276 aa)) is the GH18 domain. Intrachain disulfides connect cysteine 45-cysteine 92 and cysteine 75-cysteine 82. Glutamate 152 (proton donor) is an active-site residue. Residues cysteine 187 and cysteine 216 are joined by a disulfide bond.

It belongs to the glycosyl hydrolase 18 family. Chitinase class II subfamily.

The catalysed reaction is Random endo-hydrolysis of N-acetyl-beta-D-glucosaminide (1-&gt;4)-beta-linkages in chitin and chitodextrins.. Its function is as follows. Defense against chitin containing fungal pathogens. In Vitis vinifera (Grape), this protein is Acidic endochitinase (CHIT3).